The sequence spans 212 residues: ATP-dependent dethiobiotin synthetase BioD (212 aa).

12 to 17 (DCGKTF) lines the ATP pocket. Residue T16 participates in Mg(2+) binding. Residue K33 is part of the active site. S37 contributes to the substrate binding site. ATP contacts are provided by residues D50, 110 to 113 (EGAG), and 170 to 171 (NC). Residues D50 and E110 each coordinate Mg(2+).

It belongs to the dethiobiotin synthetase family. As to quaternary structure, homodimer. It depends on Mg(2+) as a cofactor.

The protein localises to the cytoplasm. It catalyses the reaction (7R,8S)-7,8-diammoniononanoate + CO2 + ATP = (4R,5S)-dethiobiotin + ADP + phosphate + 3 H(+). It functions in the pathway cofactor biosynthesis; biotin biosynthesis; biotin from 7,8-diaminononanoate: step 1/2. Catalyzes a mechanistically unusual reaction, the ATP-dependent insertion of CO2 between the N7 and N8 nitrogen atoms of 7,8-diaminopelargonic acid (DAPA, also called 7,8-diammoniononanoate) to form a ureido ring. In Legionella pneumophila (strain Lens), this protein is ATP-dependent dethiobiotin synthetase BioD.